The following is a 176-amino-acid chain: Probable inosine/xanthosine triphosphatase (176 aa).

Asp-36 lines the Mg(2+) pocket.

This sequence belongs to the YjjX NTPase family. As to quaternary structure, homodimer. The cofactor is Mg(2+). Mn(2+) is required as a cofactor.

The catalysed reaction is XTP + H2O = XDP + phosphate + H(+). It catalyses the reaction ITP + H2O = IDP + phosphate + H(+). In terms of biological role, phosphatase that hydrolyzes non-canonical purine nucleotides such as XTP and ITP to their respective diphosphate derivatives. Probably excludes non-canonical purines from DNA/RNA precursor pool, thus preventing their incorporation into DNA/RNA and avoiding chromosomal lesions. The chain is Probable inosine/xanthosine triphosphatase from Saccharolobus islandicus (strain M.16.4 / Kamchatka #3) (Sulfolobus islandicus).